We begin with the raw amino-acid sequence, 185 residues long: Threonylcarbamoyl-AMP synthase (185 aa).

In terms of domain architecture, YrdC-like spans 4–185 (SFRVQQAARE…LATGEVVRPG (182 aa)).

The protein belongs to the SUA5 family. TsaC subfamily.

It is found in the cytoplasm. The catalysed reaction is L-threonine + hydrogencarbonate + ATP = L-threonylcarbamoyladenylate + diphosphate + H2O. In terms of biological role, required for the formation of a threonylcarbamoyl group on adenosine at position 37 (t(6)A37) in tRNAs that read codons beginning with adenine. Catalyzes the conversion of L-threonine, HCO(3)(-)/CO(2) and ATP to give threonylcarbamoyl-AMP (TC-AMP) as the acyladenylate intermediate, with the release of diphosphate. The chain is Threonylcarbamoyl-AMP synthase from Pseudomonas putida (strain GB-1).